Reading from the N-terminus, the 95-residue chain is Aspartyl/glutamyl-tRNA(Asn/Gln) amidotransferase subunit C (95 aa).

Belongs to the GatC family. In terms of assembly, heterotrimer of A, B and C subunits.

The enzyme catalyses L-glutamyl-tRNA(Gln) + L-glutamine + ATP + H2O = L-glutaminyl-tRNA(Gln) + L-glutamate + ADP + phosphate + H(+). It catalyses the reaction L-aspartyl-tRNA(Asn) + L-glutamine + ATP + H2O = L-asparaginyl-tRNA(Asn) + L-glutamate + ADP + phosphate + 2 H(+). Allows the formation of correctly charged Asn-tRNA(Asn) or Gln-tRNA(Gln) through the transamidation of misacylated Asp-tRNA(Asn) or Glu-tRNA(Gln) in organisms which lack either or both of asparaginyl-tRNA or glutaminyl-tRNA synthetases. The reaction takes place in the presence of glutamine and ATP through an activated phospho-Asp-tRNA(Asn) or phospho-Glu-tRNA(Gln). This Ectopseudomonas mendocina (strain ymp) (Pseudomonas mendocina) protein is Aspartyl/glutamyl-tRNA(Asn/Gln) amidotransferase subunit C.